The chain runs to 312 residues: Aquaglyceroporin-2 (312 aa).

A run of 6 helical transmembrane segments spans residues 78-98, 104-124, 151-171, 203-223, 239-259, and 286-306; these read FLGN…SLLV, LGLT…SLGI, YIAA…GVFA, GIFY…LCVC, VAIG…SPLA, and YYFW…LFLY.

This sequence belongs to the MIP/aquaporin (TC 1.A.8) family.

Its subcellular location is the membrane. The catalysed reaction is glycerol(in) = glycerol(out). It carries out the reaction H2O(in) = H2O(out). It catalyses the reaction urea(in) = urea(out). In terms of biological role, mediates water and glycerol transport across cell membranes. Permeable to urea. Permeable to methylamine/methylammonium. Permeable to dihydroxyacetone. The sequence is that of Aquaglyceroporin-2 from Trypanosoma brucei brucei.